A 663-amino-acid polypeptide reads, in one-letter code: UvrABC system protein B (663 aa).

Residues 31 to 271 (DNIEGGEKAQ…EASIAKIQAE (241 aa)) form the Helicase ATP-binding domain. 44 to 51 (GATGTGKT) lines the ATP pocket. The Beta-hairpin signature appears at 97–120 (YYDYYQPEAYVPSSDTYIEKDSSV). The region spanning 435 to 601 (QMDDLLGEIN…TIKKEIRDLI (167 aa)) is the Helicase C-terminal domain. A UVR domain is found at 627–662 (QEAIKKLQKQMHEAAELLDFELAAQIRDMVLELKSM).

It belongs to the UvrB family. Forms a heterotetramer with UvrA during the search for lesions. Interacts with UvrC in an incision complex.

It is found in the cytoplasm. Its function is as follows. The UvrABC repair system catalyzes the recognition and processing of DNA lesions. A damage recognition complex composed of 2 UvrA and 2 UvrB subunits scans DNA for abnormalities. Upon binding of the UvrA(2)B(2) complex to a putative damaged site, the DNA wraps around one UvrB monomer. DNA wrap is dependent on ATP binding by UvrB and probably causes local melting of the DNA helix, facilitating insertion of UvrB beta-hairpin between the DNA strands. Then UvrB probes one DNA strand for the presence of a lesion. If a lesion is found the UvrA subunits dissociate and the UvrB-DNA preincision complex is formed. This complex is subsequently bound by UvrC and the second UvrB is released. If no lesion is found, the DNA wraps around the other UvrB subunit that will check the other stand for damage. This is UvrABC system protein B from Streptococcus uberis (strain ATCC BAA-854 / 0140J).